Reading from the N-terminus, the 181-residue chain is Endoglucanase (181 aa).

Cysteine 4 and cysteine 16 are disulfide-bonded. Residue aspartate 24 is the Nucleophile of the active site. 5 cysteine pairs are disulfide-bonded: cysteine 30–cysteine 69, cysteine 32–cysteine 176, cysteine 65–cysteine 178, cysteine 72–cysteine 157, and cysteine 103–cysteine 113. The active-site Proton donor is aspartate 132.

As to expression, digestive gland.

It carries out the reaction Endohydrolysis of (1-&gt;4)-beta-D-glucosidic linkages in cellulose, lichenin and cereal beta-D-glucans.. In terms of biological role, active towards the soluble carboxymethylcellulose (CMC). Possesses expansin activity too. The sequence is that of Endoglucanase from Mytilus edulis (Blue mussel).